The primary structure comprises 462 residues: GTPase Der (462 aa).

2 EngA-type G domains span residues 2–164 (KKIA…PKKE) and 195–366 (INVA…KNYS). Residues 8–15 (GKPNVGKS), 55–59 (DTGGI), 116–119 (NKID), 201–208 (GRVNVGKS), 248–252 (DTAGI), and 312–315 (NKWD) each bind GTP. Residues 367 to 451 (TWLPTGQLNR…PIILRPRKRG (85 aa)) form the KH-like domain.

It belongs to the TRAFAC class TrmE-Era-EngA-EngB-Septin-like GTPase superfamily. EngA (Der) GTPase family. Associates with the 50S ribosomal subunit.

Its function is as follows. GTPase that plays an essential role in the late steps of ribosome biogenesis. This Nitratiruptor sp. (strain SB155-2) protein is GTPase Der.